We begin with the raw amino-acid sequence, 846 residues long: FNIP repeat-containing protein DDB_G0289381 (846 aa).

Residues 1–11 (MKLLSFKKKPS) show a composition bias toward basic residues. A disordered region spans residues 1-39 (MKLLSFKKKPSLTKSQSCPDKLKNLKEQQKDPKNGANYD). Positions 20–33 (DKLKNLKEQQKDPK) are enriched in basic and acidic residues. FNIP repeat units follow at residues 159-193 (IPNH…FGEK), 194-239 (FNQV…FGNN), 240-283 (FDQI…FQEN), and 284-325 (FNQP…YGGD). Residues 362–384 (SSISLDISGGGSGSGSGVNSTTT) form a disordered region. FNIP repeat units follow at residues 458 to 500 (FQQL…FGDG), 501 to 546 (FNQQ…FGKS), and 654 to 693 (FNQS…MFNK). The tract at residues 702–734 (SNNNNENNNENNNENNNENNNENNNENNNNTNS) is disordered. Residues 702-734 (SNNNNENNNENNNENNNENNNENNNENNNNTNS) adopt a coiled-coil conformation.

This is FNIP repeat-containing protein DDB_G0289381 from Dictyostelium discoideum (Social amoeba).